The following is a 161-amino-acid chain: Transcriptional regulator MraZ (161 aa).

2 SpoVT-AbrB domains span residues 7-55 (RYTN…GPAF) and 84-127 (SAEL…EPGA).

It belongs to the MraZ family. Forms oligomers.

The protein localises to the cytoplasm. The protein resides in the nucleoid. The chain is Transcriptional regulator MraZ from Parvibaculum lavamentivorans (strain DS-1 / DSM 13023 / NCIMB 13966).